Consider the following 432-residue polypeptide: 3-phosphoshikimate 1-carboxyvinyltransferase (432 aa).

The 3-phosphoshikimate site is built by Lys23, Ser24, and Arg28. Lys23 serves as a coordination point for phosphoenolpyruvate. Phosphoenolpyruvate contacts are provided by Gly95 and Arg123. 4 residues coordinate 3-phosphoshikimate: Ser166, Gln168, Asp315, and Lys342. Gln168 lines the phosphoenolpyruvate pocket. Catalysis depends on Asp315, which acts as the Proton acceptor. 2 residues coordinate phosphoenolpyruvate: Arg346 and Arg390.

The protein belongs to the EPSP synthase family. As to quaternary structure, monomer.

The protein localises to the cytoplasm. The enzyme catalyses 3-phosphoshikimate + phosphoenolpyruvate = 5-O-(1-carboxyvinyl)-3-phosphoshikimate + phosphate. The protein operates within metabolic intermediate biosynthesis; chorismate biosynthesis; chorismate from D-erythrose 4-phosphate and phosphoenolpyruvate: step 6/7. Functionally, catalyzes the transfer of the enolpyruvyl moiety of phosphoenolpyruvate (PEP) to the 5-hydroxyl of shikimate-3-phosphate (S3P) to produce enolpyruvyl shikimate-3-phosphate and inorganic phosphate. The protein is 3-phosphoshikimate 1-carboxyvinyltransferase of Lactiplantibacillus plantarum (strain ATCC BAA-793 / NCIMB 8826 / WCFS1) (Lactobacillus plantarum).